Consider the following 363-residue polypeptide: DNA replication and repair protein RecF (363 aa).

31-38 serves as a coordination point for ATP; the sequence is GANSSGKT.

It belongs to the RecF family.

It is found in the cytoplasm. Functionally, the RecF protein is involved in DNA metabolism; it is required for DNA replication and normal SOS inducibility. RecF binds preferentially to single-stranded, linear DNA. It also seems to bind ATP. This chain is DNA replication and repair protein RecF, found in Nitrosococcus oceani (strain ATCC 19707 / BCRC 17464 / JCM 30415 / NCIMB 11848 / C-107).